The following is a 219-amino-acid chain: Resolvase (219 aa).

The region spanning 15–159 is the Resolvase/invertase-type recombinase catalytic domain; sequence VARIYLRAST…EDRRERQRQG (145 aa). Ser-23 acts as the O-(5'-phospho-DNA)-serine intermediate in catalysis.

It belongs to the site-specific recombinase resolvase family.

In terms of biological role, involved in plasmid partition. The sequence is that of Resolvase (parA) from Escherichia coli.